The primary structure comprises 163 residues: Protein FAM167B (163 aa).

Residues 73–132 are a coiled coil; that stretch reads FDSMDSALEWLRRELREMQAQDRQLAGQLLRLRAQLHRLKMDQACHLHQELLDEAELELE.

Belongs to the FAM167 (SEC) family.

This Homo sapiens (Human) protein is Protein FAM167B (FAM167B).